Consider the following 1452-residue polypeptide: ABC multidrug transporter A (1452 aa).

Positions 1–20 (MNESHEAGKNSSTNVEEREE) are disordered. 5 N-linked (GlcNAc...) asparagine glycosylation sites follow: Asn2, Asn10, Asn228, Asn287, and Asn311. Residues 110-363 (LKTLSLARIA…FLQMGFVCPD (254 aa)) enclose the ABC transporter 1 domain. 6 consecutive transmembrane segments (helical) span residues 474-494 (VTISSLFGNTIISLVIASIFY), 508-528 (ALLFFAVLMNALGCGLEMLTL), 554-574 (MIMDLPYKILNAITSNIVLYF), 583-603 (GAFFFFVFTSFILTLTMSMFF), 616-636 (VLPFSAVLLLGLSMYTGFAIP), and 725-745 (IGVIFAYMFLLGAVYLVATDF). Positions 802–1044 (FQWKDVCFDI…ILIDYFVRNG (243 aa)) constitute an ABC transporter 2 domain. 838–845 (GVSGAGKT) serves as a coordination point for ATP. A run of 5 helical transmembrane segments spans residues 1153–1173 (ALCVLSALFVGFSLFHTPNTI), 1183–1203 (IFMLLTLFGQLIQQIMPHFVA), 1223–1243 (FLIANIVVELPWNSLMSVLMF), 1271–1291 (LMIWTFLLFSSTFAHFMIAAF), and 1297–1317 (AGNLGNLLFLLCLLFCGVLAT). N-linked (GlcNAc...) asparagine glycans are attached at residues Asn1350, Asn1365, and Asn1391. A helical membrane pass occupies residues 1418–1438 (FGLMWVFIVFNIFAACSLYWW).

Belongs to the ABC transporter superfamily. ABCG family. PDR (TC 3.A.1.205) subfamily.

Its subcellular location is the membrane. Functionally, ABC transporter that seems not to be involved in the efflux of toxic substances, at least not the classical compounds such as itraconazole, amphotericin B, voriconazole, posaconazole, ravuconazole, or echinocandins. This is ABC multidrug transporter A from Aspergillus fumigatus (Neosartorya fumigata).